A 730-amino-acid chain; its full sequence is Regulatory factor X 4 (730 aa).

The segment covering 30–41 has biased composition (polar residues); the sequence is YSSHTSLGNISN. The segment at 30-59 is disordered; that stretch reads YSSHTSLGNISNDETDEEKENRASKPHSTP. The segment at residues 61-136 is a DNA-binding region (RFX-type winged-helix); that stretch reads TLQWLGENYE…YHYYGIAVKE (76 aa). A disordered region spans residues 500–532; the sequence is EPAISTPSPVPFSPAASSSSVEIPSATSPVSNQ. Low complexity predominate over residues 512–528; that stretch reads SPAASSSSVEIPSATSP.

Belongs to the RFX family.

Its subcellular location is the nucleus. In terms of biological role, required for neural tube ciliogenesis during embryogenesis. The protein is Regulatory factor X 4 of Xenopus laevis (African clawed frog).